The following is a 465-amino-acid chain: Sodium-dependent phosphate transport protein 1 (465 aa).

N39, N47, and N56 each carry an N-linked (GlcNAc...) asparagine glycan. 10 helical membrane-spanning segments follow: residues 79 to 99 (GLIL…VGYL), 117 to 137 (SLMS…VIVC), 176 to 196 (FVMG…LLGW), 199 to 219 (VFYI…FLFF), 260 to 280 (LPLW…SLLV), 304 to 324 (LPYL…DFFL), 337 to 356 (LFTT…LLYL), 363 to 383 (TVIF…GQLI), 399 to 419 (VTAL…GLIL), and 429 to 449 (KIFF…FLFA).

It belongs to the major facilitator superfamily. Sodium/anion cotransporter family. In terms of assembly, interacts with PDZK1. In terms of tissue distribution, kidney.

The protein resides in the apical cell membrane. The catalysed reaction is 3 Na(+)(out) + phosphate(out) = 3 Na(+)(in) + phosphate(in). It carries out the reaction urate(out) = urate(in). Important for the resorption of phosphate by the kidney. May be involved in actively transporting phosphate into cells via Na(+) cotransport in the renal brush border membrane. Plays a role in urate transport in the kidney. In Mus musculus (Mouse), this protein is Sodium-dependent phosphate transport protein 1 (Slc17a1).